The chain runs to 149 residues: Nucleoside diphosphate kinase (149 aa).

ATP is bound by residues lysine 9, phenylalanine 57, arginine 85, threonine 91, arginine 102, and asparagine 112. Catalysis depends on histidine 115, which acts as the Pros-phosphohistidine intermediate.

Belongs to the NDK family. As to quaternary structure, homotetramer. Mg(2+) serves as cofactor.

The protein localises to the cytoplasm. The catalysed reaction is a 2'-deoxyribonucleoside 5'-diphosphate + ATP = a 2'-deoxyribonucleoside 5'-triphosphate + ADP. It catalyses the reaction a ribonucleoside 5'-diphosphate + ATP = a ribonucleoside 5'-triphosphate + ADP. Its function is as follows. Major role in the synthesis of nucleoside triphosphates other than ATP. The ATP gamma phosphate is transferred to the NDP beta phosphate via a ping-pong mechanism, using a phosphorylated active-site intermediate. This is Nucleoside diphosphate kinase from Nostoc punctiforme (strain ATCC 29133 / PCC 73102).